The primary structure comprises 148 residues: uncharacterized protein (148 aa).

Belongs to the SufE family.

This is an uncharacterized protein from Rhizobium etli (strain ATCC 51251 / DSM 11541 / JCM 21823 / NBRC 15573 / CFN 42).